Consider the following 190-residue polypeptide: Peptidyl-tRNA hydrolase (190 aa).

Phe14 contributes to the tRNA binding site. Catalysis depends on His19, which acts as the Proton acceptor. Positions 64, 66, and 112 each coordinate tRNA.

It belongs to the PTH family. In terms of assembly, monomer.

The protein resides in the cytoplasm. It carries out the reaction an N-acyl-L-alpha-aminoacyl-tRNA + H2O = an N-acyl-L-amino acid + a tRNA + H(+). Its function is as follows. Hydrolyzes ribosome-free peptidyl-tRNAs (with 1 or more amino acids incorporated), which drop off the ribosome during protein synthesis, or as a result of ribosome stalling. Catalyzes the release of premature peptidyl moieties from peptidyl-tRNA molecules trapped in stalled 50S ribosomal subunits, and thus maintains levels of free tRNAs and 50S ribosomes. In Staphylococcus epidermidis (strain ATCC 35984 / DSM 28319 / BCRC 17069 / CCUG 31568 / BM 3577 / RP62A), this protein is Peptidyl-tRNA hydrolase.